A 504-amino-acid chain; its full sequence is Maturase K (504 aa).

This sequence belongs to the intron maturase 2 family. MatK subfamily.

It is found in the plastid. It localises to the chloroplast. Its function is as follows. Usually encoded in the trnK tRNA gene intron. Probably assists in splicing its own and other chloroplast group II introns. In Nepenthes gracilis (Slender pitcher plant), this protein is Maturase K.